The following is a 540-amino-acid chain: Chaperonin GroEL 4 (540 aa).

Residues 29–32 (TLGP), 86–90 (DGTTT), Gly413, 477–479 (NAA), and Asp493 contribute to the ATP site.

Belongs to the chaperonin (HSP60) family. In terms of assembly, forms a cylinder of 14 subunits composed of two heptameric rings stacked back-to-back. Interacts with the co-chaperonin GroES.

It localises to the cytoplasm. The catalysed reaction is ATP + H2O + a folded polypeptide = ADP + phosphate + an unfolded polypeptide.. Together with its co-chaperonin GroES, plays an essential role in assisting protein folding. The GroEL-GroES system forms a nano-cage that allows encapsulation of the non-native substrate proteins and provides a physical environment optimized to promote and accelerate protein folding. In Frankia casuarinae (strain DSM 45818 / CECT 9043 / HFP020203 / CcI3), this protein is Chaperonin GroEL 4.